Reading from the N-terminus, the 320-residue chain is Ferrochelatase (320 aa).

Residues His-194 and Glu-275 each coordinate Fe cation.

This sequence belongs to the ferrochelatase family.

The protein resides in the cytoplasm. It carries out the reaction heme b + 2 H(+) = protoporphyrin IX + Fe(2+). The protein operates within porphyrin-containing compound metabolism; protoheme biosynthesis; protoheme from protoporphyrin-IX: step 1/1. Catalyzes the ferrous insertion into protoporphyrin IX. The sequence is that of Ferrochelatase from Vibrio atlanticus (strain LGP32) (Vibrio splendidus (strain Mel32)).